The primary structure comprises 161 residues: Troponin C, slow skeletal and cardiac muscles (161 aa).

Met1 carries the post-translational modification N-acetylmethionine. EF-hand domains lie at 16–51 (QKNE…LGQN), 52–87 (PTPE…CMKD), 92–127 (KSEE…TGET), and 128–161 (ITED…KGVE). The Ca(2+) site is built by Asp65, Asp67, Ser69, Thr71, and Glu76. Residue Ser98 is modified to Phosphoserine. Residues Asp105, Asn107, Asp109, Tyr111, Glu116, Asp141, Asn143, Asp145, Arg147, and Glu152 each contribute to the Ca(2+) site.

Belongs to the troponin C family.

In terms of biological role, troponin is the central regulatory protein of striated muscle contraction. Tn consists of three components: Tn-I which is the inhibitor of actomyosin ATPase, Tn-T which contains the binding site for tropomyosin and Tn-C. The binding of calcium to Tn-C abolishes the inhibitory action of Tn on actin filaments. In Mus musculus (Mouse), this protein is Troponin C, slow skeletal and cardiac muscles (Tnnc1).